We begin with the raw amino-acid sequence, 68 residues long: Large ribosomal subunit protein bL35 (68 aa).

It belongs to the bacterial ribosomal protein bL35 family.

The chain is Large ribosomal subunit protein bL35 from Rickettsia conorii (strain ATCC VR-613 / Malish 7).